We begin with the raw amino-acid sequence, 149 residues long: Large ribosomal subunit protein uL15 (149 aa).

Residues 1 to 29 are compositionally biased toward basic residues; it reads MVSHLKKTRKLRGHVSHGHGRVGKHRKGG. Residues 1 to 38 form a disordered region; sequence MVSHLKKTRKLRGHVSHGHGRVGKHRKGGCRGGRGKAG.

Belongs to the universal ribosomal protein uL15 family.

In Tetrahymena thermophila, this protein is Large ribosomal subunit protein uL15 (RPL27A).